A 398-amino-acid polypeptide reads, in one-letter code: Phosphoglycerate kinase (398 aa).

Substrate-binding positions include 21-23, arginine 41, 64-67, arginine 123, and arginine 156; these read DFN and HLGR. ATP contacts are provided by residues lysine 207, glycine 294, glutamate 325, and 354-357; that span reads GGDS.

Belongs to the phosphoglycerate kinase family. In terms of assembly, monomer.

It is found in the cytoplasm. The enzyme catalyses (2R)-3-phosphoglycerate + ATP = (2R)-3-phospho-glyceroyl phosphate + ADP. Its pathway is carbohydrate degradation; glycolysis; pyruvate from D-glyceraldehyde 3-phosphate: step 2/5. In Salinibacter ruber (strain DSM 13855 / M31), this protein is Phosphoglycerate kinase.